Here is a 332-residue protein sequence, read N- to C-terminus: Glycerol-3-phosphate dehydrogenase [NAD(P)+] (332 aa).

Positions 13, 34, and 108 each coordinate NADPH. Sn-glycerol 3-phosphate is bound by residues lysine 108, glycine 136, and serine 138. Residue alanine 140 coordinates NADPH. Sn-glycerol 3-phosphate-binding residues include lysine 191, aspartate 244, serine 254, arginine 255, and asparagine 256. Lysine 191 serves as the catalytic Proton acceptor. Residue arginine 255 coordinates NADPH. 2 residues coordinate NADPH: valine 279 and glutamate 281.

It belongs to the NAD-dependent glycerol-3-phosphate dehydrogenase family.

It is found in the cytoplasm. The enzyme catalyses sn-glycerol 3-phosphate + NAD(+) = dihydroxyacetone phosphate + NADH + H(+). It carries out the reaction sn-glycerol 3-phosphate + NADP(+) = dihydroxyacetone phosphate + NADPH + H(+). Its pathway is membrane lipid metabolism; glycerophospholipid metabolism. In terms of biological role, catalyzes the reduction of the glycolytic intermediate dihydroxyacetone phosphate (DHAP) to sn-glycerol 3-phosphate (G3P), the key precursor for phospholipid synthesis. This chain is Glycerol-3-phosphate dehydrogenase [NAD(P)+], found in Francisella tularensis subsp. mediasiatica (strain FSC147).